The primary structure comprises 262 residues: 7alpha-hydroxysteroid dehydrogenase (262 aa).

NADP(+)-binding positions include 13–18 (SSTRGI), R38, 63–64 (NA), and N90. Taurochenodeoxycholate-binding residues include T145 and Y158. NADP(+) contacts are provided by residues Y158, K162, and 191–195 (IGTRA). The active-site Proton acceptor is Y158.

Belongs to the short-chain dehydrogenases/reductases (SDR) family. In terms of assembly, homotetramer. A dynamic equilibrium between dimers and tetramers seems to exist.

The enzyme catalyses cholate + NADP(+) = 3alpha,12alpha-dihydroxy-7-oxo-5beta-cholanate + NADPH + H(+). The catalysed reaction is chenodeoxycholate + NADP(+) = 7-oxolithocholate + NADPH + H(+). It carries out the reaction 3alpha,7alpha-dihydroxy-12-oxo-5beta-cholanate + NADP(+) = 7,12-dioxo-lithocholate + NADPH + H(+). It catalyses the reaction 7alpha-hydroxy-3,12-dioxo-5beta-cholanate + NADP(+) = dehydrocholate + NADPH + H(+). The enzyme catalyses glycochenodeoxycholate + NADP(+) = 7-oxoglycolithocholate + NADPH + H(+). The catalysed reaction is taurochenodeoxycholate + NADP(+) = 7-oxotaurolithocholate + NADPH + H(+). Activated by metal ions such as Mg(2+), Na(+) and K(+). 7alpha-hydroxysteroid dehydrogenase that catalyzes the NADP(+)-dependent oxidation of the 7alpha-hydroxy group of 7alpha-hydroxysteroids, such as cholate, chenodeoxycholate, glycochenodeoxycholate and taurochenodeoxycholate, to the corresponding 7-oxosteroids. Is also able to catalyze the reverse reduction reactions. Together with 7beta-HSDH encoded in the adjacent gene, is likely involved in the epimerization of the hydroxy group at C-7 of primary bile acids through 7-keto bile acid intermediates. The polypeptide is 7alpha-hydroxysteroid dehydrogenase (Clostridium sardiniense (Clostridium absonum)).